Consider the following 796-residue polypeptide: Leucine--tRNA ligase (796 aa).

A 'HIGH' region motif is present at residues 40-51; it reads PYPSASGLHVGH. The 'KMSKS' region motif lies at 569–573; the sequence is KMSKS. K572 is a binding site for ATP.

The protein belongs to the class-I aminoacyl-tRNA synthetase family.

The protein localises to the cytoplasm. The enzyme catalyses tRNA(Leu) + L-leucine + ATP = L-leucyl-tRNA(Leu) + AMP + diphosphate. The sequence is that of Leucine--tRNA ligase from Bdellovibrio bacteriovorus (strain ATCC 15356 / DSM 50701 / NCIMB 9529 / HD100).